We begin with the raw amino-acid sequence, 344 residues long: Trace amine-associated receptor 8a (344 aa).

The Extracellular portion of the chain corresponds to 1–33; it reads MTSNFSQAPLQLCYENVNASCIKTPYSPGLRVL. Residues asparagine 4 and asparagine 18 are each glycosylated (N-linked (GlcNAc...) asparagine). Disulfide bonds link cysteine 21–cysteine 185 and cysteine 96–cysteine 189. A helical transmembrane segment spans residues 34-54; that stretch reads LYMVFGFGAVLAVCGNLLVVI. Residues 55–67 lie on the Cytoplasmic side of the membrane; it reads SVLHFKQLHSPAN. A helical membrane pass occupies residues 68-88; that stretch reads FLIASLASADFLVGISVMPFS. Residues 89-102 are Extracellular-facing; the sequence is MVRSIESCWYFGDT. A helical membrane pass occupies residues 103–127; that stretch reads FCSLHSCCDAAFCYSSLFHLCFISV. At 128–146 the chain is on the cytoplasmic side; the sequence is DRYIAVTDPLVYPTKFTVS. The chain crosses the membrane as a helical span at residues 147–167; sequence VSGICISISWILPLVYSSAVF. At 168-196 the chain is on the extracellular side; that stretch reads YTGISATGIENLVSALNCVGGCQIVVNQD. Residues 197–217 form a helical membrane-spanning segment; that stretch reads WVLIDFLLFLIPTLVMIILYS. Residues 218 to 260 are Cytoplasmic-facing; that stretch reads KIFLVAKQQAVKIETSISGSKGESSLESHKARVAKRERKAAKT. The helical transmembrane segment at 261-281 threads the bilayer; sequence LGVTVVAFMVSWLPYTIDTLI. Topologically, residues 282 to 291 are extracellular; the sequence is DAFMGFITPA. A helical membrane pass occupies residues 292–314; that stretch reads YVYEICCWSAYYNSAMNPLIYAF. At 315 to 344 the chain is on the cytoplasmic side; it reads FYPWFRKAIKLILSGEILKSHSSTMSLFSE.

This sequence belongs to the G-protein coupled receptor 1 family.

The protein resides in the cell membrane. In terms of biological role, olfactory receptor activated by trace amines. Trace amine compounds are enriched in animal body fluids and act on trace amine-associated receptors (TAARs) to elicit both intraspecific and interspecific innate behaviors. Ligand-binding causes a conformation change that triggers signaling via G(s)-class of G alpha proteins (GNAL or GNAS). The protein is Trace amine-associated receptor 8a of Rattus norvegicus (Rat).